We begin with the raw amino-acid sequence, 202 residues long: Ribosome biogenesis regulatory protein homolog (202 aa).

The tract at residues 82-103 is disordered; it reads TLPPPTTPLPREKPVPQPKPET.

It belongs to the RRS1 family. In terms of assembly, component of a hexameric 5S RNP precursor complex, composed of 5S RNA, RRS1, RPF2, RPL5, RPL11 and SYO1; this complex acts as a precursor for ribosome assembly.

The protein resides in the nucleus. Its function is as follows. Involved in ribosomal large subunit assembly. The protein is Ribosome biogenesis regulatory protein homolog of Chaetomium thermophilum (strain DSM 1495 / CBS 144.50 / IMI 039719) (Thermochaetoides thermophila).